Consider the following 166-residue polypeptide: UPF0304 protein VP0990 (166 aa).

It belongs to the UPF0304 family.

The sequence is that of UPF0304 protein VP0990 from Vibrio parahaemolyticus serotype O3:K6 (strain RIMD 2210633).